Here is a 283-residue protein sequence, read N- to C-terminus: MITGKARVAGVIGWPVGHSRSPRLHGFWLARHGIDGAYVPLAVAPEALERALAALPALGLAGVNVTVPHKEHALARMDALTERARRIGAVNTIVCQSDGRLLGDNTDGFGFLENLRQRRPDWRAGHGPAVVLGAGGAARAVCASLLEAGCPALTLVNRDQGRARALAEALAAWSPVPITLATWDEAPRTLGGAALLVNTTSLGMVGQPPLDLDLRGLAPSALVTDIVYAPLETPLLARARALGLATVDGLGMLLHQGRPGFEAWFGVAPEVDDALRAAVLGKP.

Shikimate is bound by residues 19–21 (SRS) and Thr66. The active-site Proton acceptor is Lys70. Glu82 is a binding site for NADP(+). Residues Asn91 and Asp107 each contribute to the shikimate site. Residues 133-137 (GAGGA) and Ile226 contribute to the NADP(+) site. Shikimate is bound at residue Tyr228. Gly249 lines the NADP(+) pocket.

The protein belongs to the shikimate dehydrogenase family. As to quaternary structure, homodimer.

The catalysed reaction is shikimate + NADP(+) = 3-dehydroshikimate + NADPH + H(+). It functions in the pathway metabolic intermediate biosynthesis; chorismate biosynthesis; chorismate from D-erythrose 4-phosphate and phosphoenolpyruvate: step 4/7. Functionally, involved in the biosynthesis of the chorismate, which leads to the biosynthesis of aromatic amino acids. Catalyzes the reversible NADPH linked reduction of 3-dehydroshikimate (DHSA) to yield shikimate (SA). In Rhodospirillum rubrum (strain ATCC 11170 / ATH 1.1.1 / DSM 467 / LMG 4362 / NCIMB 8255 / S1), this protein is Shikimate dehydrogenase (NADP(+)).